Reading from the N-terminus, the 150-residue chain is Placenta-specific protein 4 (150 aa).

In terms of tissue distribution, expressed in placental syncytiotrophoblast and choriocarcinoma cells.

This chain is Placenta-specific protein 4 (PLAC4), found in Homo sapiens (Human).